A 317-amino-acid polypeptide reads, in one-letter code: Putative ribose-phosphate pyrophosphokinase (317 aa).

The binding of phosphoribosylpyrophosphate stretch occupies residues 211–224 (GRDVIVLDDEIAKG).

Belongs to the ribose-phosphate pyrophosphokinase family.

It catalyses the reaction D-ribose 5-phosphate + ATP = 5-phospho-alpha-D-ribose 1-diphosphate + AMP + H(+). The sequence is that of Putative ribose-phosphate pyrophosphokinase from Streptomyces coelicolor (strain ATCC BAA-471 / A3(2) / M145).